Reading from the N-terminus, the 102-residue chain is Small ribosomal subunit protein uS10 (102 aa).

It belongs to the universal ribosomal protein uS10 family. In terms of assembly, part of the 30S ribosomal subunit.

Its function is as follows. Involved in the binding of tRNA to the ribosomes. The protein is Small ribosomal subunit protein uS10 of Mycoplasma capricolum subsp. capricolum (strain California kid / ATCC 27343 / NCTC 10154).